The sequence spans 928 residues: MORC family CW-type zinc finger protein 4 (928 aa).

The CW-type zinc-finger motif lies at 417–469 (RIPDQTWVQCDECLKWRRLPGMVDPSTLPARWFCYYNPHPKFKRCSVPEEQER). Zn(2+) contacts are provided by Cys-426, Cys-429, Cys-450, and Cys-461. Disordered regions lie at residues 474-510 (LHRSKAKQQVEAAEKKQKPMESDKYQVFSNPPKTPPL), 527-546 (NSPSLLPSVREESRSPPRLK), 599-649 (AYPE…DQDQ), and 718-766 (RAES…LKRT). Residues 485 to 497 (AAEKKQKPMESDK) show a composition bias toward basic and acidic residues. Basic and acidic residues-rich tracts occupy residues 626–636 (ESNKHTEENRE), 739–748 (KGKDCQDSRS), and 756–766 (TPKESEELKRT). Residues 758–867 (KESEELKRTT…LEVLQKAQVS (110 aa)) adopt a coiled-coil conformation.

Its subcellular location is the nucleus. Its function is as follows. Histone methylation reader which binds to non-methylated (H3K4me0), monomethylated (H3K4me1), dimethylated (H3K4me2) and trimethylated (H3K4me3) 'Lys-4' on histone H3. The order of binding preference is H3K4me3 &gt; H3K4me2 &gt; H3K4me1 &gt; H3K4me0. The protein is MORC family CW-type zinc finger protein 4 (Morc4) of Mus musculus (Mouse).